The primary structure comprises 587 residues: Arginine--tRNA ligase (587 aa).

Residues 127-137 carry the 'HIGH' region motif; it reads PNLAKEMHVGH.

This sequence belongs to the class-I aminoacyl-tRNA synthetase family. In terms of assembly, monomer.

It localises to the cytoplasm. It catalyses the reaction tRNA(Arg) + L-arginine + ATP = L-arginyl-tRNA(Arg) + AMP + diphosphate. In Pseudomonas aeruginosa (strain UCBPP-PA14), this protein is Arginine--tRNA ligase.